The primary structure comprises 332 residues: uncharacterized protein (332 aa).

Residues 159-256 (PLEISGRGGN…PRPHPWGPGP (98 aa)) are disordered. Positions 201–231 (RPPSPRPPSPRPPHPRPPSPRPPHPRPPSPR) are enriched in pro residues.

The protein resides in the virion. This is an uncharacterized protein from Acanthamoeba polyphaga (Amoeba).